Reading from the N-terminus, the 718-residue chain is Catalase-peroxidase 1 (718 aa).

Positions 93 to 221 (WHSAGTYRIA…LAAVMMGLIY (129 aa)) form a cross-link, tryptophyl-tyrosyl-methioninium (Trp-Tyr) (with M-247). The Proton acceptor role is filled by His94. Positions 221–247 (YVNPEGVDGNPDPLKTAQDMRVTFARM) form a cross-link, tryptophyl-tyrosyl-methioninium (Tyr-Met) (with W-93). Position 262 (His262) interacts with heme b.

This sequence belongs to the peroxidase family. Peroxidase/catalase subfamily. As to quaternary structure, homodimer or homotetramer. The cofactor is heme b. Formation of the three residue Trp-Tyr-Met cross-link is important for the catalase, but not the peroxidase activity of the enzyme.

The catalysed reaction is H2O2 + AH2 = A + 2 H2O. It carries out the reaction 2 H2O2 = O2 + 2 H2O. Bifunctional enzyme with both catalase and broad-spectrum peroxidase activity. This chain is Catalase-peroxidase 1, found in Shewanella amazonensis (strain ATCC BAA-1098 / SB2B).